We begin with the raw amino-acid sequence, 165 residues long: Large ribosomal subunit protein bL17 (165 aa).

Residues Gln138–Asp158 show a composition bias toward basic and acidic residues. The interval Gln138–Lys165 is disordered.

This sequence belongs to the bacterial ribosomal protein bL17 family. Part of the 50S ribosomal subunit. Contacts protein L32.

In Leptospira borgpetersenii serovar Hardjo-bovis (strain JB197), this protein is Large ribosomal subunit protein bL17.